Reading from the N-terminus, the 651-residue chain is Acetyl-coenzyme A synthetase (651 aa).

CoA is bound by residues 189 to 192 (RGGK), T311, and N335. ATP is bound by residues 387–389 (GEP), 411–416 (DTWWQT), D500, and R515. S523 serves as a coordination point for CoA. Position 526 (R526) interacts with ATP. Residues V537, H539, and V542 each contribute to the Mg(2+) site. R586 provides a ligand contact to CoA. An N6-acetyllysine modification is found at K611.

Belongs to the ATP-dependent AMP-binding enzyme family. Requires Mg(2+) as cofactor. Acetylated. Deacetylation by the SIR2-homolog deacetylase activates the enzyme.

The enzyme catalyses acetate + ATP + CoA = acetyl-CoA + AMP + diphosphate. In terms of biological role, catalyzes the conversion of acetate into acetyl-CoA (AcCoA), an essential intermediate at the junction of anabolic and catabolic pathways. AcsA undergoes a two-step reaction. In the first half reaction, AcsA combines acetate with ATP to form acetyl-adenylate (AcAMP) intermediate. In the second half reaction, it can then transfer the acetyl group from AcAMP to the sulfhydryl group of CoA, forming the product AcCoA. The sequence is that of Acetyl-coenzyme A synthetase from Brucella anthropi (strain ATCC 49188 / DSM 6882 / CCUG 24695 / JCM 21032 / LMG 3331 / NBRC 15819 / NCTC 12168 / Alc 37) (Ochrobactrum anthropi).